The following is a 2102-amino-acid chain: Mediator of RNA polymerase II transcription subunit 13-like (2102 aa).

Disordered regions lie at residues 304–335 (SYAG…EEAQ), 432–487 (QRAC…QPSL), 514–587 (VTSS…LDPL), 689–758 (SSAV…TTSL), 776–819 (NSDE…DLHQ), and 947–1034 (SVVE…SSVE). Positions 439–450 (GHPPSAGQPPQP) are enriched in pro residues. The segment covering 455-467 (KMAEKLEKGDKQQ) has biased composition (basic and acidic residues). Positions 693-714 (CDEDPEQESDPYAFEEGDEEFN) are enriched in acidic residues. 2 stretches are compositionally biased toward basic and acidic residues: residues 715–737 (FSDK…REDG) and 794–804 (AEEKFGGKEPK). A compositionally biased stretch (polar residues) spans 947–974 (SVVEQEQSCTPQTHNTFMSNSAPPSNSG). Low complexity predominate over residues 979–990 (PSPATPRISAPT). Over residues 1015-1029 (SDLNSPASTPSTCRP) the composition is skewed to polar residues. 2 consecutive short sequence motifs (LXXLL motif) follow at residues 1165 to 1169 (LMLLL) and 1254 to 1258 (LRMLL). 2 disordered regions span residues 1451–1574 (LTQR…DGDS) and 1948–1983 (NSPT…HDES). Composition is skewed to low complexity over residues 1458–1467 (SSSQTSSSSS), 1476–1502 (TPTT…SSSS), and 1522–1538 (GAQG…QSAG). Residues 1542 to 1552 (DATSATSQPQV) are compositionally biased toward polar residues. Over residues 1973 to 1983 (GTDRMESHDES) the composition is skewed to basic and acidic residues.

It belongs to the Mediator complex subunit 13 family. As to quaternary structure, component of the Mediator complex.

The protein resides in the nucleus. Component of the Mediator complex, a coactivator involved in regulated gene transcription of nearly all RNA polymerase II-dependent genes. Mediator functions as a bridge to convey information from gene-specific regulatory proteins to the basal RNA polymerase II transcription machinery. Mediator is recruited to promoters by direct interactions with regulatory proteins and serves as a scaffold for the assembly of a functional preinitiation complex with RNA polymerase II and the general transcription factors. This is Mediator of RNA polymerase II transcription subunit 13-like from Danio rerio (Zebrafish).